The sequence spans 563 residues: BOS complex subunit NCLN (563 aa).

An N-terminal signal peptide occupies residues 1-42 (MLEEAGEVLENVLKASCLPLGFIVFLPAVLLLVAPPLPAADA). Topologically, residues 43-522 (AHEFTVYRMQ…VMNAYRVKPA (480 aa)) are lumenal. Residues Asn241 and Asn428 are each glycosylated (N-linked (GlcNAc...) asparagine). The helical transmembrane segment at 523 to 543 (IFDLLLALCIGAYLGMAYTAV) threads the bilayer. At 544–563 (QHFHVLYKTVQRLLLKAKAQ) the chain is on the cytoplasmic side.

It belongs to the nicastrin family. As to quaternary structure, component of the back of Sec61 (BOS) complex, composed of NCLN/Nicalin, NOMO1 and TMEM147. The BOS complex is part of the multi-pass translocon (MPT) complex, composed of three subcomplexes, the GEL complex (composed of RAB5IF/OPTI and TMCO1), the BOS complex (composed of NCLN/Nicalin, NOMO1 and TMEM147) and the PAT complex (composed of WDR83OS/Asterix and CCDC47). The MPT complex associates with the SEC61 complex.

It is found in the endoplasmic reticulum membrane. Its function is as follows. Component of the multi-pass translocon (MPT) complex that mediates insertion of multi-pass membrane proteins into the lipid bilayer of membranes. The MPT complex takes over after the SEC61 complex: following membrane insertion of the first few transmembrane segments of proteins by the SEC61 complex, the MPT complex occludes the lateral gate of the SEC61 complex to promote insertion of subsequent transmembrane regions. May antagonize Nodal signaling and subsequent organization of axial structures during mesodermal patterning, via its interaction with NOMO. This chain is BOS complex subunit NCLN (Ncln), found in Rattus norvegicus (Rat).